Here is a 126-residue protein sequence, read N- to C-terminus: uncharacterized protein (126 aa).

Thr68 carries the post-translational modification Phosphothreonine.

This is an uncharacterized protein from Pseudomonas aeruginosa (strain UCBPP-PA14).